The primary structure comprises 491 residues: Glucose-6-phosphate 1-dehydrogenase (491 aa).

Residues Arg-50, 92 to 93 (DV), and Lys-147 each bind NADP(+). Substrate contacts are provided by His-177, Lys-181, Glu-215, and Asp-234. His-239 (proton acceptor) is an active-site residue. Residues Lys-339 and Lys-344 each contribute to the substrate site.

This sequence belongs to the glucose-6-phosphate dehydrogenase family.

The catalysed reaction is D-glucose 6-phosphate + NADP(+) = 6-phospho-D-glucono-1,5-lactone + NADPH + H(+). It functions in the pathway carbohydrate degradation; pentose phosphate pathway; D-ribulose 5-phosphate from D-glucose 6-phosphate (oxidative stage): step 1/3. Its function is as follows. Catalyzes the oxidation of glucose 6-phosphate to 6-phosphogluconolactone. This Dickeya dadantii (strain 3937) (Erwinia chrysanthemi (strain 3937)) protein is Glucose-6-phosphate 1-dehydrogenase.